The primary structure comprises 964 residues: Probable LRR receptor-like serine/threonine-protein kinase IRK (964 aa).

The N-terminal stretch at 1-20 (MYKALIFTVLLVSAVAPVRS) is a signal peptide. The Extracellular portion of the chain corresponds to 21-603 (LDPPLNDDVL…GHKRILLSIS (583 aa)). LRR repeat units lie at residues 92–116 (LQFL…MLLS), 117–141 (LVNL…FFRQ), 143–166 (GSLR…ISSC), 168–190 (SLAA…IWSL), 191–214 (NTLR…IDRL), 215–238 (NNLR…IGSC), 240–261 (LLKT…TFQQ), 263–286 (SLCY…IGEM), 287–310 (RSLE…IGNL), 312–334 (ALKV…TANC), and 335–358 (INLL…LFQD). Residue Asn-104 is glycosylated (N-linked (GlcNAc...) asparagine). Asn-173 carries an N-linked (GlcNAc...) asparagine glycan. Residue Asn-317 is glycosylated (N-linked (GlcNAc...) asparagine). An N-linked (GlcNAc...) asparagine glycan is attached at Asn-370. LRR repeat units follow at residues 375–399 (IKKI…LGDL), 400–423 (RDLE…IGEL), 425–447 (HLSV…TGGA), 448–471 (VSLE…IKNC), 472–495 (SSLR…LAKL), 496–519 (TRLE…LANL), and 521–544 (YLHT…IFNG). N-linked (GlcNAc...) asparagine glycosylation is present at Asn-470. N-linked (GlcNAc...) asparagine glycosylation is found at Asn-526, Asn-562, and Asn-578. Residues 604-624 (SLIAISAAAAIVVGVIAITVL) traverse the membrane as a helical segment. At 625 to 964 (NLRVRASTVS…SGSSDELGSS (340 aa)) the chain is on the cytoplasmic side. The Protein kinase domain maps to 678–951 (LNKDCELGRG…GEAVNILRMI (274 aa)). ATP contacts are provided by residues 684–692 (LGRGGFGAV) and Lys-706.

Belongs to the protein kinase superfamily. Ser/Thr protein kinase family. Interacts with IRKI. Post-translationally, autophosphorylated. As to expression, highly expressed in root tips, shoot apices and developing flowers.

The protein resides in the cell membrane. The catalysed reaction is L-seryl-[protein] + ATP = O-phospho-L-seryl-[protein] + ADP + H(+). The enzyme catalyses L-threonyl-[protein] + ATP = O-phospho-L-threonyl-[protein] + ADP + H(+). The protein is Probable LRR receptor-like serine/threonine-protein kinase IRK of Arabidopsis thaliana (Mouse-ear cress).